The primary structure comprises 151 residues: Ubiquitin-conjugating enzyme E2 2 (151 aa).

Residues 1 to 26 (MSTSARRRLMRDFKRMQTDPPAGVSA) form a disordered region. Positions 4-150 (SARRRLMRDF…VRETVEKSWE (147 aa)) constitute a UBC core domain. Cys88 serves as the catalytic Glycyl thioester intermediate.

This sequence belongs to the ubiquitin-conjugating enzyme family.

It is found in the cytoplasm. The protein resides in the nucleus. The enzyme catalyses S-ubiquitinyl-[E1 ubiquitin-activating enzyme]-L-cysteine + [E2 ubiquitin-conjugating enzyme]-L-cysteine = [E1 ubiquitin-activating enzyme]-L-cysteine + S-ubiquitinyl-[E2 ubiquitin-conjugating enzyme]-L-cysteine.. The protein operates within protein modification; protein ubiquitination. In terms of biological role, catalyzes the covalent attachment of ubiquitin to other proteins. Plays a role in transcription regulation by catalyzing the monoubiquitination of histone H2B to form H2BK123ub1. H2BK123ub1 gives a specific tag for epigenetic transcriptional activation and is also a prerequisite for H3K4me and H3K79me formation. Also involved in postreplication repair of UV-damaged DNA, in N-end rule-dependent protein degradation and in sporulation. This Aspergillus fumigatus (strain ATCC MYA-4609 / CBS 101355 / FGSC A1100 / Af293) (Neosartorya fumigata) protein is Ubiquitin-conjugating enzyme E2 2 (ubc2).